A 492-amino-acid chain; its full sequence is Fumarate hydratase 1, mitochondrial (492 aa).

The N-terminal 28 residues, 1 to 28 (MSIYVASRRLSGGTTVTALRYATSLRSY), are a transit peptide targeting the mitochondrion. Residues 127-129 (SGT), 157-160 (HPND), 167-169 (SSN), and Thr-215 contribute to the substrate site. The active-site Proton donor/acceptor is His-216. Ser-346 is an active-site residue. Substrate is bound by residues Ser-347 and 352–354 (KVN).

The protein belongs to the class-II fumarase/aspartase family. Fumarase subfamily. Homotetramer.

It localises to the mitochondrion. It catalyses the reaction (S)-malate = fumarate + H2O. Its pathway is carbohydrate metabolism; tricarboxylic acid cycle; (S)-malate from fumarate: step 1/1. With respect to regulation, fumarate hydratase activity (fumarate to L-malate) is strongly inhibited by phosphoenolpyruvate, citrate, oxaloacetate, ATP and ADP. Malate dehydratase activity (malate to fumarate) is activated by oxaloacetate, pyruvate, Asn and Gln. Malate dehydratase activity (malate to fumarate) is inhibited by citrate, succinate, ADP, ATP, glucose-6P and phosphoenolpyruvate. Its function is as follows. Catalyzes the reversible stereospecific interconversion of fumarate to L-malate. Catalyzes the hydration of fumarate to L-malate in the tricarboxylic acid (TCA) cycle to facilitate a transition step in the production of energy in the form of NADH. This is Fumarate hydratase 1, mitochondrial from Arabidopsis thaliana (Mouse-ear cress).